We begin with the raw amino-acid sequence, 69 residues long: MLCLPVFIILLLLASPAAPKSLETRIQNDLIRAGLTDADLKTEKGFLSGLLNVAGSVCCKVDTSCCSNQ.

The N-terminal stretch at methionine 1 to proline 19 is a signal peptide. Positions lysine 20–alanine 54 are excised as a propeptide.

The protein belongs to the conotoxin T superfamily. Post-translationally, contains 2 disulfide bonds that can be either 'C1-C3, C2-C4' or 'C1-C4, C2-C3', since these disulfide connectivities have been observed for conotoxins with cysteine framework V (for examples, see AC P0DQQ7 and AC P81755). In terms of tissue distribution, expressed by the venom duct.

It localises to the secreted. This Conus litteratus (Lettered cone) protein is Conotoxin Lt5.7.